The following is a 199-amino-acid chain: uncharacterized protein (199 aa).

Transmembrane regions (helical) follow at residues 27–47 (LIKITLVNLYLALTVPLPILA), 55–75 (LLTLLLTVGLMGGLVALVAAL), and 172–192 (LLLLLFTFLLWGSQLAIVLLL).

Its subcellular location is the cell membrane. This is an uncharacterized protein from Synechocystis sp. (strain ATCC 27184 / PCC 6803 / Kazusa).